The sequence spans 401 residues: Chalcone synthase 5 (401 aa).

The active site involves Cys-168.

Belongs to the thiolase-like superfamily. Chalcone/stilbene synthases family.

The enzyme catalyses (E)-4-coumaroyl-CoA + 3 malonyl-CoA + 3 H(+) = 2',4,4',6'-tetrahydroxychalcone + 3 CO2 + 4 CoA. It functions in the pathway secondary metabolite biosynthesis; flavonoid biosynthesis. The primary product of this enzyme is 4,2',4',6'-tetrahydroxychalcone (also termed naringenin-chalcone or chalcone) which can under specific conditions spontaneously isomerize into naringenin. The protein is Chalcone synthase 5 (CHS5) of Sorghum bicolor (Sorghum).